The sequence spans 239 residues: Ribosomal RNA small subunit methyltransferase G (239 aa).

S-adenosyl-L-methionine-binding positions include Gly-77, Phe-82, 128–129, and Arg-147; that span reads AE.

The protein belongs to the methyltransferase superfamily. RNA methyltransferase RsmG family.

It localises to the cytoplasm. Its function is as follows. Specifically methylates the N7 position of guanine in position 535 of 16S rRNA. The polypeptide is Ribosomal RNA small subunit methyltransferase G (Bacillus anthracis (strain A0248)).